A 296-amino-acid polypeptide reads, in one-letter code: GTPase Era (296 aa).

In terms of domain architecture, Era-type G spans 7–174 (RTGFVAVVGR…LDEIAARLPE (168 aa)). The segment at 15 to 22 (GRPNVGKS) is G1. 15-22 (GRPNVGKS) contributes to the GTP binding site. The segment at 41–45 (QTTRH) is G2. The tract at residues 62 to 65 (DTPG) is G3. GTP-binding positions include 62–66 (DTPGF) and 123–126 (SKID). Residues 123 to 126 (SKID) form a G4 region. Residues 153–155 (VSA) are G5. One can recognise a KH type-2 domain in the interval 205–281 (VGDELPYGCT…HLEVYIKVRK (77 aa)).

Belongs to the TRAFAC class TrmE-Era-EngA-EngB-Septin-like GTPase superfamily. Era GTPase family. Monomer.

The protein resides in the cytoplasm. Its subcellular location is the cell inner membrane. An essential GTPase that binds both GDP and GTP, with rapid nucleotide exchange. Plays a role in 16S rRNA processing and 30S ribosomal subunit biogenesis and possibly also in cell cycle regulation and energy metabolism. This is GTPase Era from Bordetella petrii (strain ATCC BAA-461 / DSM 12804 / CCUG 43448).